The primary structure comprises 145 residues: Large ribosomal subunit protein uL15 (145 aa).

The segment at 1–52 (MKLNTIAPAEGSKKDRRRVGRGIGSGFGKTAGRGHKGQHARSGGYHKVGFEG) is disordered. Residues 21-31 (RGIGSGFGKTA) are compositionally biased toward gly residues.

The protein belongs to the universal ribosomal protein uL15 family. Part of the 50S ribosomal subunit.

Its function is as follows. Binds to the 23S rRNA. This Acidithiobacillus ferrooxidans (strain ATCC 53993 / BNL-5-31) (Leptospirillum ferrooxidans (ATCC 53993)) protein is Large ribosomal subunit protein uL15.